A 68-amino-acid polypeptide reads, in one-letter code: ATP synthase subunit K, mitochondrial (68 aa).

Residues 15 to 31 (HQLAIGTLGLLGLLVVP) traverse the membrane as a helical segment.

This sequence belongs to the ATP19 family. As to quaternary structure, F-type ATPases have 2 components, CF(1) - the catalytic core - and CF(0) - the membrane proton channel. In yeast, the dimeric form of ATP synthase consists of 17 polypeptides: alpha, beta, gamma, delta, epsilon, 4 (B), 5 (OSCP), 6 (A), 8, 9 (C), d, E (Tim11), f, g, h, i/j and k.

The protein localises to the mitochondrion inner membrane. Its function is as follows. Mitochondrial membrane ATP synthase (F(1)F(0) ATP synthase or Complex V) produces ATP from ADP in the presence of a proton gradient across the membrane which is generated by electron transport complexes of the respiratory chain. F-type ATPases consist of two structural domains, F(1) - containing the extramembraneous catalytic core and F(0) - containing the membrane proton channel, linked together by a central stalk and a peripheral stalk. During catalysis, ATP synthesis in the catalytic domain of F(1) is coupled via a rotary mechanism of the central stalk subunits to proton translocation. Part of the complex F(0) domain. Minor subunit located with subunit a in the membrane. The K chain binds the dimeric form by interacting with the G and E chains. This chain is ATP synthase subunit K, mitochondrial (ATP19), found in Saccharomyces cerevisiae (strain ATCC 204508 / S288c) (Baker's yeast).